Reading from the N-terminus, the 103-residue chain is ATP synthase F(0) complex subunit g, mitochondrial (103 aa).

At Ala2 the chain carries N-acetylalanine. Residues Lys11, Lys24, and Lys54 each carry the N6-acetyllysine modification.

Belongs to the ATPase g subunit family. In terms of assembly, component of the ATP synthase complex composed at least of ATP5F1A/subunit alpha, ATP5F1B/subunit beta, ATP5MC1/subunit c (homooctomer), MT-ATP6/subunit a, MT-ATP8/subunit 8, ATP5ME/subunit e, ATP5MF/subunit f, ATP5MG/subunit g, ATP5MK/subunit k, ATP5MJ/subunit j, ATP5F1C/subunit gamma, ATP5F1D/subunit delta, ATP5F1E/subunit epsilon, ATP5PF/subunit F6, ATP5PB/subunit b, ATP5PD/subunit d, ATP5PO/subunit OSCP. ATP synthase complex consists of a soluble F(1) head domain (subunits alpha(3) and beta(3)) - the catalytic core - and a membrane F(0) domain - the membrane proton channel (subunits c, a, 8, e, f, g, k and j). These two domains are linked by a central stalk (subunits gamma, delta, and epsilon) rotating inside the F1 region and a stationary peripheral stalk (subunits F6, b, d, and OSCP).

The protein resides in the mitochondrion. It localises to the mitochondrion inner membrane. Functionally, subunit g, of the mitochondrial membrane ATP synthase complex (F(1)F(0) ATP synthase or Complex V) that produces ATP from ADP in the presence of a proton gradient across the membrane which is generated by electron transport complexes of the respiratory chain. ATP synthase complex consist of a soluble F(1) head domain - the catalytic core - and a membrane F(1) domain - the membrane proton channel. These two domains are linked by a central stalk rotating inside the F(1) region and a stationary peripheral stalk. During catalysis, ATP synthesis in the catalytic domain of F(1) is coupled via a rotary mechanism of the central stalk subunits to proton translocation. In vivo, can only synthesize ATP although its ATP hydrolase activity can be activated artificially in vitro. Part of the complex F(0) domain. This Rattus norvegicus (Rat) protein is ATP synthase F(0) complex subunit g, mitochondrial.